Consider the following 345-residue polypeptide: uncharacterized protein (345 aa).

This sequence belongs to the Gfo/Idh/MocA family. Biliverdin reductase subfamily.

This is an uncharacterized protein from Escherichia coli (strain K12).